A 138-amino-acid polypeptide reads, in one-letter code: MTKPIPRIGLRRNGRIGLRKNGRRISKGVIHVQASFNNTIVTVTDVRGRVVSWSSAGTCGFRGARRGTPFAAQTAAGNAIRTVVDQGMQRAEVMIKGPGLGRDAALRAIRRSGILLSFVRDVTPMPHNGCRPPKKRRV.

This sequence belongs to the universal ribosomal protein uS11 family. As to quaternary structure, part of the 30S ribosomal subunit.

It is found in the plastid. The protein localises to the chloroplast. The chain is Small ribosomal subunit protein uS11c from Illicium oligandrum (Star anise).